The chain runs to 763 residues: Ethylene receptor 2 (763 aa).

Transmembrane regions (helical) follow at residues 58–78 (FLIA…ATCS), 86–106 (IVLQ…ITMF), and 115–135 (VVLA…ATAI). Cu cation-binding residues include Cys-97 and His-101. A GAF domain is found at 190-339 (DRHTILYTTM…VVADQVAVAL (150 aa)). The region spanning 382 to 615 (AMYDGMRRPM…TIMLALQFQL (234 aa)) is the Histidine kinase domain. The Response regulatory domain maps to 641–760 (QVILVDSDDT…ALGDELYRVL (120 aa)). Asp-692 bears the 4-aspartylphosphate mark.

It belongs to the ethylene receptor family. Requires Cu cation as cofactor. Expressed in anthers and hulls.

It localises to the endoplasmic reticulum membrane. It carries out the reaction ATP + protein L-histidine = ADP + protein N-phospho-L-histidine.. Functionally, ethylene receptor related to bacterial two-component regulators. Acts as a negative regulator of ethylene signaling. May delay the transition from the vegetative stage to the floral stage by up-regulating GI (GIGANTEA) and RCN1 and cause starch accumulation in stems by down-regulating the alpha-amylase AMY3D. The chain is Ethylene receptor 2 from Oryza sativa subsp. indica (Rice).